The primary structure comprises 566 residues: Sister chromatid cohesion protein 1 (566 aa).

Ser-161 carries the phosphoserine modification. Ser-175 is modified (phosphoserine; by CDC5). An N6-acetyllysine; by ECO1 modification is found at Lys-210. The residue at position 263 (Ser-263) is a Phosphoserine; by CDC5. Position 307 is a phosphoserine (Ser-307). The segment at 325-356 (SIQIDEETENSESIASSNTYKEERSNNLLTPQ) is disordered. Thr-354 is subject to Phosphothreonine.

The protein belongs to the rad21 family. As to quaternary structure, interacts directly with IRR1/SCC3 in cohesin complex. Cohesin complexes are composed of the SMC1 and SMC3 heterodimer attached via their hinge domain, MCD1/SCC1 which link them, and IRR1, which interacts with MCD1. The cohesin complex also interacts with SCC2, which is required for its association with chromosomes. Post-translationally, cleaved by ESP1 at the onset of anaphase. In terms of processing, phosphorylated by CDC5/Polo-like kinase at the onset of anaphase. Phosphorylation takes places at proximity to cleavage sites and is required for an efficient cleavage by ESP1. Acetylated by ECO1.

It is found in the nucleus. The protein localises to the chromosome. The protein resides in the centromere. Its function is as follows. Cleavable component of the cohesin complex involved in chromosome cohesion during cell cycle. The cohesin complex is required for the cohesion of sister chromatids after DNA replication. The cohesin complex apparently forms a large proteinaceous ring within which sister chromatids can be trapped. At metaphase-anaphase transition, this protein is cleaved by ESP1 and dissociates from chromatin, allowing sister chromatids to segregate. The polypeptide is Sister chromatid cohesion protein 1 (MCD1) (Saccharomyces cerevisiae (strain ATCC 204508 / S288c) (Baker's yeast)).